The sequence spans 354 residues: Ribosomal RNA large subunit methyltransferase K (354 aa).

Belongs to the methyltransferase superfamily.

The protein resides in the cytoplasm. It catalyses the reaction guanosine(2069) in 23S rRNA + S-adenosyl-L-methionine = N(2)-methylguanosine(2069) in 23S rRNA + S-adenosyl-L-homocysteine + H(+). Functionally, specifically methylates the guanine in position 2069 (m7G2069) of 23S rRNA. The sequence is that of Ribosomal RNA large subunit methyltransferase K (rlmK) from Neisseria meningitidis serogroup B (strain ATCC BAA-335 / MC58).